The following is a 467-amino-acid chain: UDP-N-acetylmuramate--L-alanine ligase (467 aa).

Residue 114–120 (GTHGKTT) coordinates ATP.

Belongs to the MurCDEF family.

The protein localises to the cytoplasm. The enzyme catalyses UDP-N-acetyl-alpha-D-muramate + L-alanine + ATP = UDP-N-acetyl-alpha-D-muramoyl-L-alanine + ADP + phosphate + H(+). Its pathway is cell wall biogenesis; peptidoglycan biosynthesis. Functionally, cell wall formation. In Bradyrhizobium sp. (strain BTAi1 / ATCC BAA-1182), this protein is UDP-N-acetylmuramate--L-alanine ligase.